The sequence spans 495 residues: Neuronal acetylcholine receptor subunit beta-4 (495 aa).

Positions 1–20 (MRGTPLLLVSLFALLQPGDC) are cleaved as a signal peptide. Over 21 to 235 (RLANAEEKLM…IIKRKPLFYT (215 aa)) the chain is Extracellular. Asn-35, Asn-92, Asn-137, and Asn-165 each carry an N-linked (GlcNAc...) asparagine glycan. Cys-152 and Cys-166 are disulfide-bonded. The helical transmembrane segment at 236 to 256 (INLIIPCVLITSLAILVFYLP) threads the bilayer. Topologically, residues 257–264 (SDCGEKMT) are cytoplasmic. Glu-261 lines the Na(+) pocket. A helical membrane pass occupies residues 265–285 (LCISVLLALTFFLLLISKIVP). The Extracellular segment spans residues 286–297 (PTSLDIPLIGKY). A helical membrane pass occupies residues 298–318 (LLFTMVLVTFSIVTTVCVLNV). The Cytoplasmic segment spans residues 319 to 463 (HHRSPSTHTM…WKFVAMVVDR (145 aa)). Residues 464–484 (LFLWVFVIVCILGTMGLFLPP) form a helical membrane-spanning segment. Topologically, residues 485-495 (LFQIHAPSKGL) are extracellular.

Belongs to the ligand-gated ion channel (TC 1.A.9) family. Acetylcholine receptor (TC 1.A.9.1) subfamily. Beta-4/CHRNB4 sub-subfamily. Neuronal AChR is composed of two different types of subunits: alpha and beta. CHRNB4/Beta-4 subunit can be combined to CHRNA2/alpha-2, CHRNA3/alpha-3 or CHRNA4/alpha-4, CHRNA5/alpha-5 and CHRNB3/beta-3 to give rise to functional receptors. Forms stoichiometries such as (CHRNA3)2:(CHRNB4)3 or (CHRNA3:CHRNB4)2:CHRNB3. Interacts with RIC3; which is required for proper folding and assembly. Interacts with LYPD6. As to expression, predominantly expressed by immature T-cells in the thymus.

The protein resides in the synaptic cell membrane. It is found in the cell membrane. It carries out the reaction K(+)(in) = K(+)(out). The catalysed reaction is Na(+)(in) = Na(+)(out). The enzyme catalyses Ca(2+)(in) = Ca(2+)(out). Activated by a myriad of ligands such as acetylcholine, cytisine, nicotine, choline and epibatidine. The heteropentamer CHRNA3:CHRNB4 activity is blocked by the alpha-conotoxin ImI and AuIB. Component of neuronal acetylcholine receptors (nAChRs) that function as pentameric, ligand-gated cation channels with high calcium permeability among other activities. nAChRs are excitatory neurotrasnmitter receptors formed by a collection of nAChR subunits known to mediate synaptic transmission in the nervous system and the neuromuscular junction. Each nAchR subunit confers differential attributes to channel properties, including activation, deactivation and desensitization kinetics, pH sensitivity, cation permeability, and binding to allosteric modulators. CHRNB4 forms heteropentameric neuronal acetylcholine receptors with CHRNA2, CHRNA3 and CHRNA4, as well as CHRNA5 and CHRNB3 as accesory subunits. CHRNA3:CHRNB4 being predominant in neurons of the autonomic ganglia, it is known as ganglionic nicotinic receptor. CHRNA3:CHRNB4 or CHRNA3:CHRNA5:CHRNB4 play also an important role in the habenulo-interpeduncular tract, modulating the mesolimbic dopamine system and affecting reward circuits and addiction. Hypothalamic CHRNA3:CHRNB4 nAChR activation by nicotine leads to activation of POMC neurons and a decrease in food intake. The chain is Neuronal acetylcholine receptor subunit beta-4 (Chrnb4) from Mus musculus (Mouse).